Consider the following 100-residue polypeptide: ATP synthase subunit c (100 aa).

2 helical membrane-spanning segments follow: residues 26-46 (FSVV…AIGM) and 71-91 (MFIA…IALI).

It belongs to the ATPase C chain family. As to quaternary structure, F-type ATPases have 2 components, F(1) - the catalytic core - and F(0) - the membrane proton channel. F(1) has five subunits: alpha(3), beta(3), gamma(1), delta(1), epsilon(1). F(0) has three main subunits: a(1), b(2) and c(10-14). The alpha and beta chains form an alternating ring which encloses part of the gamma chain. F(1) is attached to F(0) by a central stalk formed by the gamma and epsilon chains, while a peripheral stalk is formed by the delta and b chains.

Its subcellular location is the cell inner membrane. In terms of biological role, f(1)F(0) ATP synthase produces ATP from ADP in the presence of a proton or sodium gradient. F-type ATPases consist of two structural domains, F(1) containing the extramembraneous catalytic core and F(0) containing the membrane proton channel, linked together by a central stalk and a peripheral stalk. During catalysis, ATP synthesis in the catalytic domain of F(1) is coupled via a rotary mechanism of the central stalk subunits to proton translocation. Its function is as follows. Key component of the F(0) channel; it plays a direct role in translocation across the membrane. A homomeric c-ring of between 10-14 subunits forms the central stalk rotor element with the F(1) delta and epsilon subunits. The polypeptide is ATP synthase subunit c (Campylobacter fetus subsp. fetus (strain 82-40)).